A 426-amino-acid chain; its full sequence is MTQMDDAKNGIITEEMKIVAEKEKIDIEKLRKLIAKGYVVILKNVNRDTNPVGIGQSLRTKVNANIGTSPDCVDIELEIKKAKIAEKYGADAVMDLSTGGNLEEIRKAIMDAVKIPIGTVPIYEVGKLAREKYGRVIDMNEDLMFKVIEKQAKEGVDFMTLHCGITKQSVERLKRSGRIMGVVSRGGAFLTAYILYHNEENPLYKNFDYLLDILKEHDVTISLGDGMRPGCLADNTDRAQIEELITLGELVERCREKGVQCMVEGPGHIPINYIETNIRLQKSLCKNAPFYVLGPIVTDIAPGYDHITAAIGGALAGYYGADFLCYVTPSEHLRLPTIEDVKEGVIATKIAAQAADVAKGNKLAWEKETEMAYARKNHDWEKQFELAIDKEKARKMREEIPSKEEKACSICGDYCALLMVEELGKR.

Substrate contacts are provided by residues N65, M94, Y123, H162, 184–186, 225–228, and E264; these read SRG and DGMR. Residue H268 participates in Zn(2+) binding. Y291 provides a ligand contact to substrate. H332 is a Zn(2+) binding site. [4Fe-4S] cluster is bound by residues C408, C411, and C415.

Belongs to the ThiC family. [4Fe-4S] cluster serves as cofactor.

The catalysed reaction is 5-amino-1-(5-phospho-beta-D-ribosyl)imidazole + S-adenosyl-L-methionine = 4-amino-2-methyl-5-(phosphooxymethyl)pyrimidine + CO + 5'-deoxyadenosine + formate + L-methionine + 3 H(+). It participates in cofactor biosynthesis; thiamine diphosphate biosynthesis. In terms of biological role, catalyzes the synthesis of the hydroxymethylpyrimidine phosphate (HMP-P) moiety of thiamine from aminoimidazole ribotide (AIR) in a radical S-adenosyl-L-methionine (SAM)-dependent reaction. The sequence is that of Phosphomethylpyrimidine synthase from Methanocaldococcus jannaschii (strain ATCC 43067 / DSM 2661 / JAL-1 / JCM 10045 / NBRC 100440) (Methanococcus jannaschii).